The following is a 107-amino-acid chain: uncharacterized protein (107 aa).

Transmembrane regions (helical) follow at residues 5 to 25 and 42 to 62; these read WTII…VINV and ILVI…VGIF. Over residues 82–92 the composition is skewed to basic and acidic residues; the sequence is IHKQEDTHLAD. The disordered stretch occupies residues 82 to 107; the sequence is IHKQEDTHLADQTDTQDASAMIEKKD.

Its subcellular location is the cell membrane. This is an uncharacterized protein from Bacillus subtilis (strain 168).